We begin with the raw amino-acid sequence, 318 residues long: Probable cell division protein WhiA (318 aa).

The H-T-H motif DNA-binding region spans 276 to 310; sequence TLQELGEMVESGSISKSGINHRLRKIDQIADKIRN.

This sequence belongs to the WhiA family.

Its function is as follows. Involved in cell division and chromosome segregation. This Exiguobacterium sibiricum (strain DSM 17290 / CCUG 55495 / CIP 109462 / JCM 13490 / 255-15) protein is Probable cell division protein WhiA.